An 834-amino-acid chain; its full sequence is Phenylalanine--tRNA ligase beta subunit (834 aa).

Residues 48-159 (GDIERPLVVG…GTAEPGTDAN (112 aa)) form the tRNA-binding domain. One can recognise a B5 domain in the interval 411-492 (PAPEPIRMDI…RLEGLEQIPS (82 aa)). The Mg(2+) site is built by Asp470, Asp476, Glu479, and Glu480. The FDX-ACB domain occupies 740-833 (SPFPAVLQDV…AADAVGAVLR (94 aa)).

This sequence belongs to the phenylalanyl-tRNA synthetase beta subunit family. Type 1 subfamily. Tetramer of two alpha and two beta subunits. Mg(2+) serves as cofactor.

The protein localises to the cytoplasm. The enzyme catalyses tRNA(Phe) + L-phenylalanine + ATP = L-phenylalanyl-tRNA(Phe) + AMP + diphosphate + H(+). This Nocardia farcinica (strain IFM 10152) protein is Phenylalanine--tRNA ligase beta subunit.